Reading from the N-terminus, the 352-residue chain is Peptide chain release factor 1 (352 aa).

Residue Gln-233 is modified to N5-methylglutamine. Residues 288 to 309 are disordered; the sequence is NAKDRKEQVGSGDRSERIRTYN. A compositionally biased stretch (basic and acidic residues) spans 289–306; that stretch reads AKDRKEQVGSGDRSERIR.

It belongs to the prokaryotic/mitochondrial release factor family. Methylated by PrmC. Methylation increases the termination efficiency of RF1.

It localises to the cytoplasm. Its function is as follows. Peptide chain release factor 1 directs the termination of translation in response to the peptide chain termination codons UAG and UAA. The polypeptide is Peptide chain release factor 1 (Helicobacter pylori (strain Shi470)).